We begin with the raw amino-acid sequence, 89 residues long: Small ribosomal subunit protein uS15 (89 aa).

The tract at residues 1–25 is disordered; the sequence is MSLDTTEKQQLINTHQTHGTDTGSA. The span at 8 to 25 shows a compositional bias: polar residues; the sequence is KQQLINTHQTHGTDTGSA.

The protein belongs to the universal ribosomal protein uS15 family. Part of the 30S ribosomal subunit. Forms a bridge to the 50S subunit in the 70S ribosome, contacting the 23S rRNA.

In terms of biological role, one of the primary rRNA binding proteins, it binds directly to 16S rRNA where it helps nucleate assembly of the platform of the 30S subunit by binding and bridging several RNA helices of the 16S rRNA. Its function is as follows. Forms an intersubunit bridge (bridge B4) with the 23S rRNA of the 50S subunit in the ribosome. The chain is Small ribosomal subunit protein uS15 from Synechococcus sp. (strain CC9902).